The following is a 286-amino-acid chain: uncharacterized protein (286 aa).

An N-terminal signal peptide occupies residues 1 to 19 (MISKEYISLLSALLTKGYS).

This is an uncharacterized protein from Acidianus filamentous virus 2 (isolate Italy/Pozzuoli) (AFV-2).